Consider the following 141-residue polypeptide: Succinate dehydrogenase [ubiquinone] cytochrome b small subunit 2 (141 aa).

A mitochondrion-targeting transit peptide spans 1 to 24 (MSLIRCTTSKALKFRQLLKMAART). Over 25–44 (SVTTPVSREPFSIEDHSLHF) the chain is Mitochondrial matrix. Residues 45 to 63 (KIERYWAAGMIPLIPTAYF) traverse the membrane as a helical segment. Over 64-68 (IHTPA) the chain is Mitochondrial intermembrane. Residues 69–89 (MDAVLTVAIVLHVHWGIAGVV) form a helical membrane-spanning segment. Histidine 80 provides a ligand contact to heme b. Residues 90–104 (SDYARPFVIGDTLAR) lie on the Mitochondrial matrix side of the membrane. Residue tyrosine 92 participates in a ubiquinone binding. Residues 105-126 (VARASVYIITVILLASLLHFNN) form a helical membrane-spanning segment. Topologically, residues 127–141 (SDVGLTKAFEMVWSL) are mitochondrial intermembrane.

This sequence belongs to the CybS family. In terms of assembly, component of the mitochondrial electron transport chain complex II composed of four subunits: a flavoprotein (Fp), an iron-sulfur protein (Ip), and a large cytochrome b (CybL) subunit and a small cytochrome b (CybS) subunit. There are 2 developmental stage-specific forms of complex II which have the Ip and CybL subunits in common. Complex II from the free-living larvae (aerobic environment) acts as a succinate dehydrogenase and is composed of the common subunit Ip and CybL and the stage specific subunits FpL and CybSL. Complex II from parasitic larvae and adults (anaerobic environment) acts as a fumarate reductase and is composed of the common subunit Ip and CybL and the stage specific subunits FpA and CybSA. The cofactor is heme b.

It is found in the mitochondrion inner membrane. It functions in the pathway carbohydrate metabolism; tricarboxylic acid cycle; fumarate from succinate (eukaryal route): step 1/1. In terms of biological role, membrane-bound small subunit (CybS) of the mitochondrial electron transport chain complex II, which together with the membrane-bound large subunit (CybL), anchor the catalytic subunits to the inner mitochondria membrane. During the free-living egg-larvae stages, which occur in an aerobic environment, complex II acts as a succinate dehydrogenase by transferring electrons from succinate to ubiquinone. The chain is Succinate dehydrogenase [ubiquinone] cytochrome b small subunit 2 from Ascaris suum (Pig roundworm).